A 319-amino-acid chain; its full sequence is Extracellular phospholipase A1 (319 aa).

The first 24 residues, Met-1–Ala-24, serve as a signal peptide directing secretion.

The enzyme catalyses a 1,2-diacyl-sn-glycero-3-phosphocholine + H2O = a 2-acyl-sn-glycero-3-phosphocholine + a fatty acid + H(+). The chain is Extracellular phospholipase A1 (phlA) from Serratia liquefaciens.